A 906-amino-acid polypeptide reads, in one-letter code: Protein translocase subunit SecA (906 aa).

ATP is bound by residues glutamine 89, 107 to 111, and aspartate 502; that span reads GEGKT. The interval 868 to 887 is disordered; that stretch reads VPPAQRDPADPRTWGKVSRN. Residues cysteine 890, cysteine 892, cysteine 901, and histidine 902 each coordinate Zn(2+).

It belongs to the SecA family. In terms of assembly, monomer and homodimer. Part of the essential Sec protein translocation apparatus which comprises SecA, SecYEG and auxiliary proteins SecDF-YajC and YidC. Zn(2+) is required as a cofactor.

It is found in the cell inner membrane. The protein resides in the cytoplasm. The catalysed reaction is ATP + H2O + cellular proteinSide 1 = ADP + phosphate + cellular proteinSide 2.. Its function is as follows. Part of the Sec protein translocase complex. Interacts with the SecYEG preprotein conducting channel. Has a central role in coupling the hydrolysis of ATP to the transfer of proteins into and across the cell membrane, serving both as a receptor for the preprotein-SecB complex and as an ATP-driven molecular motor driving the stepwise translocation of polypeptide chains across the membrane. This is Protein translocase subunit SecA from Brucella melitensis biotype 1 (strain ATCC 23456 / CCUG 17765 / NCTC 10094 / 16M).